A 162-amino-acid polypeptide reads, in one-letter code: NADH-quinone oxidoreductase subunit I (162 aa).

4Fe-4S ferredoxin-type domains lie at leucine 53–glutamate 83 and arginine 93–asparagine 122. Positions 63, 66, 69, 73, 102, 105, 108, and 112 each coordinate [4Fe-4S] cluster.

Belongs to the complex I 23 kDa subunit family. As to quaternary structure, NDH-1 is composed of 14 different subunits. Subunits NuoA, H, J, K, L, M, N constitute the membrane sector of the complex. The cofactor is [4Fe-4S] cluster.

The protein resides in the cell inner membrane. It catalyses the reaction a quinone + NADH + 5 H(+)(in) = a quinol + NAD(+) + 4 H(+)(out). Functionally, NDH-1 shuttles electrons from NADH, via FMN and iron-sulfur (Fe-S) centers, to quinones in the respiratory chain. The immediate electron acceptor for the enzyme in this species is believed to be ubiquinone. Couples the redox reaction to proton translocation (for every two electrons transferred, four hydrogen ions are translocated across the cytoplasmic membrane), and thus conserves the redox energy in a proton gradient. In Paramagnetospirillum magneticum (strain ATCC 700264 / AMB-1) (Magnetospirillum magneticum), this protein is NADH-quinone oxidoreductase subunit I.